Reading from the N-terminus, the 115-residue chain is uncharacterized protein (115 aa).

The Cytoplasmic portion of the chain corresponds to 1–11; the sequence is MKLTKEKKNDC. The helical transmembrane segment at 12–32 threads the bilayer; that stretch reads LVGVSYIPPLNFFTLTFLFLL. The Extracellular segment spans residues 33-52; the sequence is RIEKVHLSLSLSLSLSLRFY. A helical transmembrane segment spans residues 53 to 73; it reads YFHNVCYPSLFLFFCFVIPFF. Residues 74-78 lie on the Cytoplasmic side of the membrane; it reads YSVRF. A helical membrane pass occupies residues 79 to 98; that stretch reads ILLYLHILRSFYELNILLLY. At 99–115 the chain is on the extracellular side; it reads GAENSRRQSPPGYYVIR.

It is found in the membrane. This is an uncharacterized protein from Saccharomyces cerevisiae (strain ATCC 204508 / S288c) (Baker's yeast).